The primary structure comprises 196 residues: Carnitine operon protein CaiE (196 aa).

Residues 176 to 196 (LRQMEENRPRLQGTTDVAPKR) are disordered.

The protein belongs to the transferase hexapeptide repeat family.

The protein operates within amine and polyamine metabolism; carnitine metabolism. In terms of biological role, overproduction of CaiE stimulates the activity of CaiB and CaiD. The sequence is that of Carnitine operon protein CaiE from Escherichia fergusonii (strain ATCC 35469 / DSM 13698 / CCUG 18766 / IAM 14443 / JCM 21226 / LMG 7866 / NBRC 102419 / NCTC 12128 / CDC 0568-73).